A 340-amino-acid polypeptide reads, in one-letter code: Fructose-bisphosphate aldolase (340 aa).

A D-glyceraldehyde 3-phosphate-binding site is contributed by Ser53. Asp95 serves as the catalytic Proton donor. Residues His96, Asp131, Glu161, and His212 each coordinate Zn(2+). Dihydroxyacetone phosphate is bound at residue Gly213. Position 249 (His249) interacts with Zn(2+). Dihydroxyacetone phosphate is bound by residues 250-252 (GGS) and 271-274 (NLDT).

Belongs to the class II fructose-bisphosphate aldolase family. Requires Zn(2+) as cofactor.

The catalysed reaction is beta-D-fructose 1,6-bisphosphate = D-glyceraldehyde 3-phosphate + dihydroxyacetone phosphate. It participates in carbohydrate degradation; glycolysis; D-glyceraldehyde 3-phosphate and glycerone phosphate from D-glucose: step 4/4. In terms of biological role, catalyzes the aldol condensation of dihydroxyacetone phosphate (DHAP or glycerone-phosphate) with glyceraldehyde 3-phosphate (G3P) to form fructose 1,6-bisphosphate (FBP) in gluconeogenesis and the reverse reaction in glycolysis. The sequence is that of Fructose-bisphosphate aldolase (fba) from Streptomyces galbus.